Reading from the N-terminus, the 179-residue chain is NAD(P)H-quinone oxidoreductase subunit J (179 aa).

The protein belongs to the complex I 30 kDa subunit family. In terms of assembly, NDH-1 can be composed of about 15 different subunits; different subcomplexes with different compositions have been identified which probably have different functions. In at one experiment the initiator methionine has been seen to be kept and removed.

Its subcellular location is the cellular thylakoid membrane. It carries out the reaction a plastoquinone + NADH + (n+1) H(+)(in) = a plastoquinol + NAD(+) + n H(+)(out). The catalysed reaction is a plastoquinone + NADPH + (n+1) H(+)(in) = a plastoquinol + NADP(+) + n H(+)(out). Its function is as follows. NDH-1 shuttles electrons from an unknown electron donor, via FMN and iron-sulfur (Fe-S) centers, to quinones in the respiratory and/or the photosynthetic chain. The immediate electron acceptor for the enzyme in this species is believed to be plastoquinone. Couples the redox reaction to proton translocation, and thus conserves the redox energy in a proton gradient. Cyanobacterial NDH-1 also plays a role in inorganic carbon-concentration. In Synechocystis sp. (strain ATCC 27184 / PCC 6803 / Kazusa), this protein is NAD(P)H-quinone oxidoreductase subunit J.